Here is a 932-residue protein sequence, read N- to C-terminus: Protocadherin gamma-A9 (932 aa).

Residues 1 to 28 form the signal peptide; the sequence is MAAPTKCQLRGRLVLLCSLLGMLWEARA. Cadherin domains lie at 29–133, 134–242, 243–347, 348–452, 453–562, and 570–683; these read SQIR…APKF, QAES…APVF, AQRI…RPEV, TITS…PPAF, SQAS…APEI, and DGST…IPAD. Residues 29-692 are Extracellular-facing; that stretch reads SQIRYSVPEE…DLEASDLTLY (664 aa). 2 N-linked (GlcNAc...) asparagine glycosylation sites follow: Asn47 and Asn127. N-linked (GlcNAc...) asparagine glycosylation is found at Asn389, Asn419, and Asn545. Residues 693–713 traverse the membrane as a helical segment; sequence LVVAVAVVSCVFLTFVITLLA. The Cytoplasmic segment spans residues 714–932; the sequence is LRLRHWHSSH…KKKSGKKEKK (219 aa). Disordered regions lie at residues 803–841 and 902–932; these read DTPL…WPNN and ATLT…KEKK. Residues 816–841 are compositionally biased toward polar residues; that stretch reads WRFSQAQRPGTSGSQNGDDTGTWPNN. Positions 922–932 are enriched in basic residues; the sequence is NKKKSGKKEKK.

It is found in the cell membrane. Functionally, potential calcium-dependent cell-adhesion protein. May be involved in the establishment and maintenance of specific neuronal connections in the brain. In Pan troglodytes (Chimpanzee), this protein is Protocadherin gamma-A9 (PCDHGA9).